The primary structure comprises 968 residues: Catenin delta-1 (968 aa).

Met-1 is modified (N-acetylmethionine). A necessary and sufficient for interaction with CCDC85B region spans residues 1–357; sequence MDDSEVESTA…ASLDSLRKGG (357 aa). Phosphoserine is present on Ser-4. Residues 10–46 are a coiled coil; that stretch reads ASILASVKEQEAQFEKLTRALEEERRHVSAQLERVRV. Ser-47 carries the phosphoserine modification. A Phosphothreonine modification is found at Thr-59. Position 112 is a phosphotyrosine; by FYN (Tyr-112). Ser-125 bears the Phosphoserine mark. Tyr-217 and Tyr-221 each carry phosphotyrosine. Residue Ser-225 is modified to Phosphoserine. Tyr-228 is modified (phosphotyrosine). Phosphoserine occurs at positions 230 and 252. Tyr-257 is modified (phosphotyrosine). 2 positions are modified to phosphoserine: Ser-268 and Ser-269. At Tyr-280 the chain carries Phosphotyrosine. Ser-288 carries the phosphoserine; by PAK5 modification. A Phosphotyrosine modification is found at Tyr-291. The Nuclear localization signal (NLS) signature appears at 299-306; the sequence is MSDYGTAR. At Ser-300 the chain carries Phosphoserine. Thr-304 bears the Phosphothreonine mark. Ser-320, Ser-346, Ser-349, and Ser-352 each carry phosphoserine. ARM repeat units lie at residues 358-395, 398-437, 441-475, and 476-516; these read PPPP…HLCY, DKVK…NISF, QDNK…ITGT, and LWNL…NEDC. Lys-421 participates in a covalent cross-link: Glycyl lysine isopeptide (Lys-Gly) (interchain with G-Cter in SUMO2). Lys-517 is covalently cross-linked (Glycyl lysine isopeptide (Lys-Gly) (interchain with G-Cter in SUMO2)). The Nuclear localization signal (NLS) signature appears at 521–528; that stretch reads IEWESVLT. 6 ARM repeats span residues 534–573, 583–624, 653–693, 700–739, 740–780, and 781–826; these read LRNV…DSDS, LRNL…AKKG, ARGY…NLCA, RYIR…NLAV, DARN…SILN, and TINE…ALVL. Phosphothreonine is present on residues Ile-566, Asp-572, Ser-587, and Glu-593. The Nuclear localization signal (NLS) signature appears at 568–575; sequence QKDSDSKL. Ser-617 carries the post-translational modification Phosphoserine. The Nuclear localization signal (NLS) signature appears at 622–629; it reads KKGKDEWF. Residue Ser-713 is modified to Phosphoserine. Phosphothreonine occurs at positions 788, 794, and 809. The residue at position 811 (Ser-811) is a Phosphoserine. Residues Ser-815, Leu-835, and Lys-841 each carry the phosphothreonine modification. Ser-847 bears the Phosphoserine mark. The disordered stretch occupies residues 855–944; the sequence is NASRSQSSHS…LMQDEGQESL (90 aa). Ala-856 carries the post-translational modification Phosphothreonine. A phosphoserine mark is found at Ser-857, Ser-859, and Ser-861. The residue at position 862 (Ser-862) is a Phosphothreonine. Ser-864 carries the post-translational modification Phosphoserine. The residue at position 865 (Tyr-865) is a Phosphotyrosine. The residue at position 868 (Ser-868) is a Phosphoserine. Thr-869 is subject to Phosphothreonine. Positions 875-888 are enriched in basic and acidic residues; that stretch reads RNQKSDKKPDREEI. The residue at position 879 (Ser-879) is a Phosphoserine. Lys-882 participates in a covalent cross-link: Glycyl lysine isopeptide (Lys-Gly) (interchain with G-Cter in SUMO2). Residues Gln-889 and Ser-895 each carry the phosphothreonine modification. Residues 889 to 908 show a composition bias toward polar residues; that stretch reads QMSNMGSNTKSLDNNYSTPN. Position 899 is a phosphoserine (Ser-899). The residue at position 904 (Tyr-904) is a Phosphotyrosine. Thr-906, Arg-910, and Thr-916 each carry phosphothreonine. A compositionally biased stretch (basic and acidic residues) spans 909-922; that stretch reads ERGDHNRTLDRSGD. Ser-920 and Ser-943 each carry phosphoserine.

The protein belongs to the beta-catenin family. Belongs to a multiprotein cell-cell adhesion complex that also contains E-cadherin/CDH1, alpha-catenin/CTNNA1, beta-catenin/CTNNB1, and gamma-catenin/JUP. Component of a cadherin:catenin adhesion complex composed of at least of CDH26, beta-catenin/CTNNB1, alpha-catenin/CTNNA1 and p120 catenin/CTNND1. Binds to the C-terminal fragment of PSEN1 and mutually competes for CDH1. Interacts with ZBTB33. Interacts with GLIS2. Interacts with FER. Interacts with NANOS1 (via N-terminal region). Interacts (via N-terminus) with GNA12; the interaction regulates CDH1-mediated cell-cell adhesion. Interacts with GNA13. Interacts with CCDC85B. Interacts with PLPP3; negatively regulates the PLPP3-mediated stabilization of CTNNB1. Interacts with DSG3; the interaction facilitates DSG3 localization and retention at cell-cell junctions. Interacts with CTNND1/p120-catenin; the interaction controls CADH5 endocytosis. Phosphorylated by FER and other protein-tyrosine kinases. Phosphorylated at Ser-288 by PAK5. Dephosphorylated by PTPRJ. As to expression, expressed in vascular endothelium. Melanocytes and melanoma cells primarily express the long isoform 1A, whereas keratinocytes express shorter isoforms, especially 3A. The shortest isoform 4A, is detected in normal keratinocytes and melanocytes, and generally lost from cells derived from squamous cell carcinomas or melanomas. The C-terminal alternatively spliced exon B is present in the p120ctn transcripts in the colon, intestine and prostate, but lost in several tumor tissues derived from these organs.

The protein localises to the cell junction. The protein resides in the adherens junction. It is found in the cytoplasm. It localises to the nucleus. Its subcellular location is the cell membrane. In terms of biological role, key regulator of cell-cell adhesion that associates with and regulates the cell adhesion properties of both C-, E- and N-cadherins, being critical for their surface stability. Promotes localization and retention of DSG3 at cell-cell junctions, via its interaction with DSG3. Beside cell-cell adhesion, regulates gene transcription through several transcription factors including ZBTB33/Kaiso2 and GLIS2, and the activity of Rho family GTPases and downstream cytoskeletal dynamics. Implicated both in cell transformation by SRC and in ligand-induced receptor signaling through the EGF, PDGF, CSF-1 and ERBB2 receptors. The chain is Catenin delta-1 from Homo sapiens (Human).